Consider the following 289-residue polypeptide: Early E1A protein (289 aa).

Positions 41-49 are interaction with RB1 in competition with E2F1; the sequence is PTLHELYDL. Residues 76–140 form an interaction with UBE2I region; that stretch reads EGIDLLTFPP…PSDDEDEEGE (65 aa). The disordered stretch occupies residues 82–107; sequence TFPPAPGSPEPPHLSRQPEQPEQRAL. A compositionally biased stretch (pro residues) spans 84–93; sequence PPAPGSPEPP. Serine 89 is modified (phosphoserine; by host). The short motif at 113–117 is the PXLXP motif, interaction with host ZMYND11 element; the sequence is PNLVP. Positions 122-126 match the LXCXE motif, interaction with host RB1 and TMEM173/STING motif; sequence LTCHE. A zinc finger lies at 154-174; that stretch reads CRSCHYHRRNTGDPDIMCSLC. A disordered region spans residues 186–240; that stretch reads PVSEPEPEPEPEPEPARPTRRPKMAPAILRRPTSPVSRECNSSTDSCDSGPSNTP. Phosphoserine; by host is present on residues serine 219 and serine 231. Polar residues predominate over residues 219–237; it reads SPVSRECNSSTDSCDSGPS. The Bipartite nuclear localization signal motif lies at 258–289; the sequence is RVGGRRQAVECIEDLLNEPGQPLDLSCKRPRP. Residues 279–283 carry the PXDLS motif, CTBP-binding motif; it reads PLDLS.

Belongs to the adenoviridae E1A protein family. Interacts with host UBE2I; this interaction interferes with polySUMOylation. Interacts with host RB1; this interaction induces the aberrant dissociation of RB1-E2F1 complex thereby disrupting the activity of RB1 and activating E2F1-regulated genes. Interacts with host ATF7; the interaction enhances ATF7-mediated viral transactivation activity which requires the zinc binding domains of both proteins. Isoform early E1A 32 kDa protein and isoform early E1A 26 kDa protein interact (via N-terminus) with CUL1 and E3 ubiquitin ligase RBX1; these interactions inhibit RBX1-CUL1-dependent elongation reaction of ubiquitin chains and attenuate ubiquitination of SCF(FBXW7) target proteins. Interacts (via PXLXP motif) with host ZMYND11/BS69 (via MYND-type zinc finger); this interaction inhibits E1A mediated transactivation. Interacts with host EP300; this interaction stimulates the acetylation of RB1 by recruiting EP300 and RB1 into a multimeric-protein complex. Interacts with host CTBP1 and CTBP2; this interaction seems to potentiate viral replication. Interacts with host DCAF7 (ref.16). Interacts with host DYRK1A. Interacts with host KPNA4; this interaction allows E1A import into the host nucleus. Interacts with host EP400; this interaction stabilizes MYC. Interacts with host TBP protein; this interaction probably disrupts the TBP-TATA complex. Interacts (via LXCXE motif) with host TMEM173/STING; this interaction impairs the ability of TMEM173/STING to sense cytosolic DNA and promote the production of type I interferon (IFN-alpha and IFN-beta). Interacts (via C-terminus) with host ZBED1/hDREF (via C-terminus); the interaction is direct.

Its subcellular location is the host nucleus. Functionally, plays a role in viral genome replication by driving entry of quiescent cells into the cell cycle. Stimulation of progression from G1 to S phase allows the virus to efficiently use the cellular DNA replicating machinery to achieve viral genome replication. E1A protein has both transforming and trans-activating activities. Induces the disassembly of the E2F1 transcription factor from RB1 by direct competition for the same binding site on RB1, with subsequent transcriptional activation of E2F1-regulated S-phase genes and of the E2 region of the adenoviral genome. Release of E2F1 leads to the ARF-mediated inhibition of MDM2 and causes TP53/p53 to accumulate because it is not targeted for degradation by MDM2-mediated ubiquitination anymore. This increase in TP53, in turn, would arrest the cell proliferation and direct its death but this effect is counteracted by the viral protein E1B-55K. Inactivation of the ability of RB1 to arrest the cell cycle is critical for cellular transformation, uncontrolled cellular growth and proliferation induced by viral infection. Interaction with RBX1 and CUL1 inhibits ubiquitination of the proteins targeted by SCF(FBXW7) ubiquitin ligase complex, and may be linked to unregulated host cell proliferation. The tumorigenesis-restraining activity of E1A may be related to the disruption of the host CtBP-CtIP complex through the CtBP binding motif. Interaction with host TMEM173/STING impairs the ability of TMEM173/STING to sense cytosolic DNA and promote the production of type I interferon (IFN-alpha and IFN-beta). Promotes the sumoylation of host ZBED1/hDREF with SUMO1. The polypeptide is Early E1A protein (Homo sapiens (Human)).